The following is a 598-amino-acid chain: Elongation factor 4 (598 aa).

A tr-type G domain is found at 2 to 183 (KHIRNFCIIA…AIIEKIPHPK (182 aa)). GTP is bound by residues 14–19 (DHGKST) and 130–133 (NKVD).

Belongs to the TRAFAC class translation factor GTPase superfamily. Classic translation factor GTPase family. LepA subfamily.

It is found in the cell inner membrane. It carries out the reaction GTP + H2O = GDP + phosphate + H(+). Its function is as follows. Required for accurate and efficient protein synthesis under certain stress conditions. May act as a fidelity factor of the translation reaction, by catalyzing a one-codon backward translocation of tRNAs on improperly translocated ribosomes. Back-translocation proceeds from a post-translocation (POST) complex to a pre-translocation (PRE) complex, thus giving elongation factor G a second chance to translocate the tRNAs correctly. Binds to ribosomes in a GTP-dependent manner. The polypeptide is Elongation factor 4 (Flavobacterium psychrophilum (strain ATCC 49511 / DSM 21280 / CIP 103535 / JIP02/86)).